A 594-amino-acid polypeptide reads, in one-letter code: APOBEC1 complementation factor (594 aa).

3 RRM domains span residues 56 to 134 (CEIF…ASVD), 136 to 218 (CRLF…WAEP), and 231 to 303 (KILY…LAKP). Residues 360-409 (HFPATKGHLSNRAIIRAPSVREIYMNVPVGAAGVRGLGGRGYLAYTGLGR) are required for nuclear localization. Position 499 is a phosphothreonine (Thr499).

Part of the apolipoprotein B mRNA editing complex with APOBEC1. Interacts with TNPO2; TNPO2 may be responsible for transport of A1CF into the nucleus. Interacts with SYNCRIP. Interacts with CELF2/CUGBP2. Interacts with RBM47. In terms of tissue distribution, widely expressed with highest levels in brain, liver, pancreas, colon and spleen.

Its subcellular location is the nucleus. The protein resides in the endoplasmic reticulum. It is found in the cytoplasm. Its function is as follows. Essential component of the apolipoprotein B mRNA editing enzyme complex which is responsible for the postranscriptional editing of a CAA codon for Gln to a UAA codon for stop in APOB mRNA. Binds to APOB mRNA and is probably responsible for docking the catalytic subunit, APOBEC1, to the mRNA to allow it to deaminate its target cytosine. The complex also protects the edited APOB mRNA from nonsense-mediated decay. The sequence is that of APOBEC1 complementation factor (A1CF) from Homo sapiens (Human).